The sequence spans 145 residues: Glutaconyl-CoA decarboxylase subunit gamma (145 aa).

The disordered stretch occupies residues 52–82; that stretch reads APAPAAAPAAAPAPAAKPAAAAPAGSVTVSA. A compositionally biased stretch (low complexity) spans 57–75; it reads AAPAAAPAPAAKPAAAAPA. The 69-residue stretch at 77–145 folds into the Biotinyl-binding domain; sequence SVTVSAPMPG…VATGDVMVIL (69 aa). N6-biotinyllysine is present on Lys112.

Heterooctamer consisting of two alpha, two beta, two gamma and two delta subunits. Biotin serves as cofactor.

The enzyme catalyses (2E)-glutaconyl-CoA + Na(+)(in) + H(+) = (2E)-butenoyl-CoA + Na(+)(out) + CO2. The protein operates within amino-acid degradation; L-glutamate degradation via hydroxyglutarate pathway; crotonoyl-CoA from L-glutamate: step 5/5. Its function is as follows. Biotin carrier subunit of the primary sodium pump glutaconyl-CoA decarboxylase (GCD). The protein is Glutaconyl-CoA decarboxylase subunit gamma (gcdC) of Acidaminococcus fermentans (strain ATCC 25085 / DSM 20731 / CCUG 9996 / CIP 106432 / VR4).